Here is a 123-residue protein sequence, read N- to C-terminus: Ribosome-binding factor A (123 aa).

This sequence belongs to the RbfA family. Monomer. Binds 30S ribosomal subunits, but not 50S ribosomal subunits or 70S ribosomes.

It is found in the cytoplasm. One of several proteins that assist in the late maturation steps of the functional core of the 30S ribosomal subunit. Associates with free 30S ribosomal subunits (but not with 30S subunits that are part of 70S ribosomes or polysomes). Required for efficient processing of 16S rRNA. May interact with the 5'-terminal helix region of 16S rRNA. The chain is Ribosome-binding factor A from Rickettsia bellii (strain OSU 85-389).